The sequence spans 309 residues: Acetyl-coenzyme A carboxylase carboxyl transferase subunit beta (309 aa).

The CoA carboxyltransferase N-terminal domain maps to 27-296 (LWKKCPKCGA…PGTEAPIEFE (270 aa)). Zn(2+) contacts are provided by Cys31, Cys34, Cys50, and Cys53. The segment at 31-53 (CPKCGAFLYKPELEKNLDVCPKC) adopts a C4-type zinc-finger fold. Positions 288–309 (GTEAPIEFEVTEKPDVDEPEGQ) are disordered.

The protein belongs to the AccD/PCCB family. In terms of assembly, acetyl-CoA carboxylase is a heterohexamer composed of biotin carboxyl carrier protein (AccB), biotin carboxylase (AccC) and two subunits each of ACCase subunit alpha (AccA) and ACCase subunit beta (AccD). Zn(2+) serves as cofactor.

The protein resides in the cytoplasm. The catalysed reaction is N(6)-carboxybiotinyl-L-lysyl-[protein] + acetyl-CoA = N(6)-biotinyl-L-lysyl-[protein] + malonyl-CoA. It participates in lipid metabolism; malonyl-CoA biosynthesis; malonyl-CoA from acetyl-CoA: step 1/1. Functionally, component of the acetyl coenzyme A carboxylase (ACC) complex. Biotin carboxylase (BC) catalyzes the carboxylation of biotin on its carrier protein (BCCP) and then the CO(2) group is transferred by the transcarboxylase to acetyl-CoA to form malonyl-CoA. This is Acetyl-coenzyme A carboxylase carboxyl transferase subunit beta from Marinobacter nauticus (strain ATCC 700491 / DSM 11845 / VT8) (Marinobacter aquaeolei).